A 580-amino-acid polypeptide reads, in one-letter code: Amino-acid acetyltransferase, mitochondrial (580 aa).

In terms of domain architecture, N-acetyltransferase spans 403-560; that stretch reads LTMQNLFDDK…KLRHQNGVVD (158 aa).

This sequence belongs to the acetyltransferase family.

The protein localises to the mitochondrion. The catalysed reaction is L-glutamate + acetyl-CoA = N-acetyl-L-glutamate + CoA + H(+). It functions in the pathway amino-acid biosynthesis; L-arginine biosynthesis; N(2)-acetyl-L-ornithine from L-glutamate: step 1/4. In terms of biological role, N-acetylglutamate synthase involved in arginine biosynthesis. This Candida albicans (strain SC5314 / ATCC MYA-2876) (Yeast) protein is Amino-acid acetyltransferase, mitochondrial (ARG2).